Consider the following 166-residue polypeptide: NADPH-dependent 7-cyano-7-deazaguanine reductase (166 aa).

The active-site Thioimide intermediate is Cys57. Residue Asp64 is the Proton donor of the active site. Substrate is bound by residues 79 to 81 (VES) and 98 to 99 (HE).

It belongs to the GTP cyclohydrolase I family. QueF type 1 subfamily.

It localises to the cytoplasm. The enzyme catalyses 7-aminomethyl-7-carbaguanine + 2 NADP(+) = 7-cyano-7-deazaguanine + 2 NADPH + 3 H(+). Its pathway is tRNA modification; tRNA-queuosine biosynthesis. Functionally, catalyzes the NADPH-dependent reduction of 7-cyano-7-deazaguanine (preQ0) to 7-aminomethyl-7-deazaguanine (preQ1). The chain is NADPH-dependent 7-cyano-7-deazaguanine reductase from Staphylococcus saprophyticus subsp. saprophyticus (strain ATCC 15305 / DSM 20229 / NCIMB 8711 / NCTC 7292 / S-41).